We begin with the raw amino-acid sequence, 345 residues long: S-adenosylmethionine:tRNA ribosyltransferase-isomerase (345 aa).

Belongs to the QueA family. Monomer.

Its subcellular location is the cytoplasm. The catalysed reaction is 7-aminomethyl-7-carbaguanosine(34) in tRNA + S-adenosyl-L-methionine = epoxyqueuosine(34) in tRNA + adenine + L-methionine + 2 H(+). The protein operates within tRNA modification; tRNA-queuosine biosynthesis. Transfers and isomerizes the ribose moiety from AdoMet to the 7-aminomethyl group of 7-deazaguanine (preQ1-tRNA) to give epoxyqueuosine (oQ-tRNA). The polypeptide is S-adenosylmethionine:tRNA ribosyltransferase-isomerase (Anaeromyxobacter sp. (strain Fw109-5)).